The following is a 657-amino-acid chain: Filensin (657 aa).

A head region spans residues Met-1–Gly-38. The 281-residue stretch at Gly-38–Leu-318 folds into the IF rod domain. A coil 1A region spans residues Leu-39–Phe-73. The tract at residues Gln-74–Leu-82 is linker 1. Residues Asp-83–Gln-182 are coil 1B. The tract at residues Thr-183–Ser-199 is linker 12. The coil 2 stretch occupies residues Pro-200 to Leu-318. The tail stretch occupies residues Asn-319–Ser-657. Disordered stretches follow at residues Ile-503–Arg-530 and Pro-565–Asp-593. Basic and acidic residues predominate over residues Pro-519–Arg-530.

This sequence belongs to the intermediate filament family. As to expression, detected in eye lens fiber cells (at protein level). Detected in embryonic eye lens.

It localises to the cell membrane. The protein localises to the cytoplasm. Its subcellular location is the cytoskeleton. It is found in the cell cortex. Its function is as follows. Required for the correct formation of lens intermediate filaments. The sequence is that of Filensin (BFSP1) from Gallus gallus (Chicken).